We begin with the raw amino-acid sequence, 483 residues long: Glutamyl-tRNA(Gln) amidotransferase subunit A (483 aa).

Residues lysine 76 and serine 151 each act as charge relay system in the active site. Residue serine 175 is the Acyl-ester intermediate of the active site.

Belongs to the amidase family. GatA subfamily. As to quaternary structure, heterotrimer of A, B and C subunits.

The catalysed reaction is L-glutamyl-tRNA(Gln) + L-glutamine + ATP + H2O = L-glutaminyl-tRNA(Gln) + L-glutamate + ADP + phosphate + H(+). Allows the formation of correctly charged Gln-tRNA(Gln) through the transamidation of misacylated Glu-tRNA(Gln) in organisms which lack glutaminyl-tRNA synthetase. The reaction takes place in the presence of glutamine and ATP through an activated gamma-phospho-Glu-tRNA(Gln). In Pseudomonas putida (strain GB-1), this protein is Glutamyl-tRNA(Gln) amidotransferase subunit A.